An 835-amino-acid chain; its full sequence is Phenylalanine--tRNA ligase beta subunit (835 aa).

One can recognise a tRNA-binding domain in the interval 44–158; it reads GPVDGPLTVG…LPGADGADVL (115 aa). The 80-residue stretch at 414–493 folds into the B5 domain; that stretch reads WSLPPIRIAV…RLEGLEVIRS (80 aa). Positions 471, 477, 480, and 481 each coordinate Mg(2+). Residues 741–834 form the FDX-ACB domain; the sequence is SPFPAVLQDV…AAERVGATLR (94 aa).

Belongs to the phenylalanyl-tRNA synthetase beta subunit family. Type 1 subfamily. Tetramer of two alpha and two beta subunits. Requires Mg(2+) as cofactor.

Its subcellular location is the cytoplasm. The catalysed reaction is tRNA(Phe) + L-phenylalanine + ATP = L-phenylalanyl-tRNA(Phe) + AMP + diphosphate + H(+). This Mycobacterium leprae (strain TN) protein is Phenylalanine--tRNA ligase beta subunit.